The following is a 126-amino-acid chain: Large ribosomal subunit protein bL12 (126 aa).

The protein belongs to the bacterial ribosomal protein bL12 family. As to quaternary structure, homodimer. Part of the ribosomal stalk of the 50S ribosomal subunit. Forms a multimeric L10(L12)X complex, where L10 forms an elongated spine to which 2 to 4 L12 dimers bind in a sequential fashion. Binds GTP-bound translation factors.

Forms part of the ribosomal stalk which helps the ribosome interact with GTP-bound translation factors. Is thus essential for accurate translation. This is Large ribosomal subunit protein bL12 from Saccharophagus degradans (strain 2-40 / ATCC 43961 / DSM 17024).